Here is a 102-residue protein sequence, read N- to C-terminus: Small ribosomal subunit protein bS18c (102 aa).

The protein belongs to the bacterial ribosomal protein bS18 family. Part of the 30S ribosomal subunit.

It is found in the plastid. It localises to the chloroplast. This chain is Small ribosomal subunit protein bS18c, found in Phaseolus vulgaris (Kidney bean).